We begin with the raw amino-acid sequence, 235 residues long: Exosome complex component RRP46 (235 aa).

Residues 1–13 (MEEETHTDAKIRA) show a composition bias toward basic and acidic residues. Residues 1-24 (MEEETHTDAKIRAENGTGSSPRGP) form a disordered region. S20 is modified (phosphoserine).

Belongs to the RNase PH family. As to quaternary structure, homodimer. Component of the RNA exosome core complex (Exo-9), composed of EXOSC1, EXOSC2, EXOSC3, EXOSC4, EXOSC5, EXOSC6, EXOSC7, EXOSC8 and EXOSC9; within the complex interacts with EXOSC3, EXOSC8, and EXOSC9. The catalytically inactive RNA exosome core complex (Exo-9) associates with the catalytic subunit EXOSC10/RRP6. Exo-9 may associate with DIS3 to form the nucleolar exosome complex, or DIS3L to form the cytoplasmic exosome complex. Exo-9 is formed by a hexameric base ring consisting of the heterodimers EXOSC4-EXOSC9, EXOSC5-EXOSC8 and EXOSC6-EXOSC7, and a cap ring consisting of EXOSC1, EXOSC2 and EXOSC3. The RNA exosome complex associates with cofactors C1D/RRP47, MPHOSPH6/MPP6 and MTREX/MTR4. Interacts with GTPBP1. Interacts with ZC3HAV1. Interacts with DDX17 only in the presence of ZC3HAV1 in an RNA-independent manner. Highly expressed in a variety of hematopoietic and epithelial tumor cell lines, but not in normal hematopoietic tissues or other normal tissue, with the exception of testis.

It is found in the nucleus. It localises to the nucleolus. Its subcellular location is the cytoplasm. Non-catalytic component of the RNA exosome complex which has 3'-&gt;5' exoribonuclease activity and participates in a multitude of cellular RNA processing and degradation events. In the nucleus, the RNA exosome complex is involved in proper maturation of stable RNA species such as rRNA, snRNA and snoRNA, in the elimination of RNA processing by-products and non-coding 'pervasive' transcripts, such as antisense RNA species and promoter-upstream transcripts (PROMPTs), and of mRNAs with processing defects, thereby limiting or excluding their export to the cytoplasm. The RNA exosome may be involved in Ig class switch recombination (CSR) and/or Ig variable region somatic hypermutation (SHM) by targeting AICDA deamination activity to transcribed dsDNA substrates. In the cytoplasm, the RNA exosome complex is involved in general mRNA turnover and specifically degrades inherently unstable mRNAs containing AU-rich elements (AREs) within their 3' untranslated regions, and in RNA surveillance pathways, preventing translation of aberrant mRNAs. It seems to be involved in degradation of histone mRNA. The catalytic inactive RNA exosome core complex of 9 subunits (Exo-9) is proposed to play a pivotal role in the binding and presentation of RNA for ribonucleolysis, and to serve as a scaffold for the association with catalytic subunits and accessory proteins or complexes. In vitro, EXOSC5 does not bind or digest single-stranded RNA and binds to double-stranded DNA without detectable DNase activity. The sequence is that of Exosome complex component RRP46 (EXOSC5) from Homo sapiens (Human).